A 435-amino-acid polypeptide reads, in one-letter code: Probable tRNA pseudouridine synthase D (435 aa).

Residue D95 is the Nucleophile of the active site. Positions G170–V396 constitute a TRUD domain.

The protein belongs to the pseudouridine synthase TruD family.

The enzyme catalyses uridine(13) in tRNA = pseudouridine(13) in tRNA. In terms of biological role, could be responsible for synthesis of pseudouridine from uracil-13 in transfer RNAs. The polypeptide is Probable tRNA pseudouridine synthase D (Natronomonas pharaonis (strain ATCC 35678 / DSM 2160 / CIP 103997 / JCM 8858 / NBRC 14720 / NCIMB 2260 / Gabara) (Halobacterium pharaonis)).